Reading from the N-terminus, the 100-residue chain is uncharacterized protein (100 aa).

The segment at 1–86 is disordered; that stretch reads MRGTRRGPSG…RHRPPEVTEP (86 aa). Pro residues predominate over residues 35-48; the sequence is DTPPPRAPPPPPPL.

This is an uncharacterized protein from Human herpesvirus 6A (strain Uganda-1102) (HHV-6 variant A).